The following is a 216-amino-acid chain: Probable nicotinate-nucleotide adenylyltransferase (216 aa).

This sequence belongs to the NadD family.

It catalyses the reaction nicotinate beta-D-ribonucleotide + ATP + H(+) = deamido-NAD(+) + diphosphate. It functions in the pathway cofactor biosynthesis; NAD(+) biosynthesis; deamido-NAD(+) from nicotinate D-ribonucleotide: step 1/1. In terms of biological role, catalyzes the reversible adenylation of nicotinate mononucleotide (NaMN) to nicotinic acid adenine dinucleotide (NaAD). This chain is Probable nicotinate-nucleotide adenylyltransferase, found in Geobacter sp. (strain M21).